The sequence spans 304 residues: MQKFDTKTFQGLILTLQDYWARQGCTIVQPLDMEVGAGTSHPMTCLRALGPEPMAAAYVQPSRRPTDGRYGENPNRLQHYYQFQVVIKPSPDNIQELYLGSLKELGMDPTIHDIRFVEDNWENPTLGAWGLGWEVWLNGMEVTQFTYFQQVGGLECKPVTGEITYGLERLAMYIQGVDSVYDLVWSDGPLGKTTYGDVFHQNEVEQSTYNFEHADVDFLFSCFEQYEKEAQHLLALEKPLPLPAYERILKAAHSFNLLDARKAISVTERQRYILRIRTLTKAVAEAYYASREALGFPMCNKKES.

It belongs to the class-II aminoacyl-tRNA synthetase family. Tetramer of two alpha and two beta subunits.

The protein resides in the cytoplasm. It catalyses the reaction tRNA(Gly) + glycine + ATP = glycyl-tRNA(Gly) + AMP + diphosphate. The polypeptide is Glycine--tRNA ligase alpha subunit (Pectobacterium carotovorum subsp. carotovorum (strain PC1)).